A 284-amino-acid chain; its full sequence is RAD52 motif-containing protein 1 (284 aa).

The interval 1 to 92 (MAELVPFAVP…KQLFQKSPVK (92 aa)) is necessary for nuclear localization and for nucleolar accumulation in response to heat shock. The RRM domain occupies 15–98 (KTLLVWELSS…SPVKVRLGTR (84 aa)). A necessary for nuclear and nucleolar localization region spans residues 90 to 133 (PVKVRLGTRHKAVQHQALALNSSKCQELANYYFGFNGCSKRIIK).

In terms of assembly, homodimer. Expressed in testis.

The protein resides in the nucleus. It localises to the cytoplasm. It is found in the nucleolus. Its subcellular location is the PML body. The protein localises to the cajal body. Its function is as follows. May confer resistance to the antitumor agent cisplatin. Binds to DNA and RNA. This chain is RAD52 motif-containing protein 1 (RDM1), found in Homo sapiens (Human).